The chain runs to 301 residues: XIAP-associated factor 1 (301 aa).

The TRAF-type zinc-finger motif lies at 22–99 (LHEAYCLRFL…KLDMQLSKLE (78 aa)). Positions 189–257 (ILPSSLPSQA…KPRTSSPRGD (69 aa)) are disordered. The span at 193–205 (SLPSQAAENQTST) shows a compositional bias: polar residues.

In terms of assembly, interacts with BIRC4; the interaction is not detected in. Interacts with BIRC1, BIRC2, BIRC3, BIRC7 and BIRC8. Part of an complex consisting of BIRC4, XAF1 and BIRC5; the complex formation requires IFN-beta stimulation. Interacts with RNF114, the interaction increases XAF1 stability and proapoptotic effects, and may regulate IFN signaling. As to expression, widely expressed. Expression is frequently down-regulated in cancer cell lines. Isoform 5 is widely expressed. Expressed in placenta (at protein level).

It localises to the cytoplasm. It is found in the nucleus. The protein localises to the mitochondrion. Its function is as follows. Seems to function as a negative regulator of members of the IAP (inhibitor of apoptosis protein) family. Inhibits anti-caspase activity of BIRC4. Induces cleavage and inactivation of BIRC4 independent of caspase activation. Mediates TNF-alpha-induced apoptosis and is involved in apoptosis in trophoblast cells. May inhibit BIRC4 indirectly by activating the mitochondrial apoptosis pathway. After translocation to mitochondria, promotes translocation of BAX to mitochondria and cytochrome c release from mitochondria. Seems to promote the redistribution of BIRC4 from the cytoplasm to the nucleus, probably independent of BIRC4 inactivation which seems to occur in the cytoplasm. The BIRC4-XAF1 complex mediates down-regulation of BIRC5/survivin; the process requires the E3 ligase activity of BIRC4. Seems to be involved in cellular sensitivity to the proapoptotic actions of TRAIL. May be a tumor suppressor by mediating apoptosis resistance of cancer cells. The chain is XIAP-associated factor 1 (XAF1) from Homo sapiens (Human).